Reading from the N-terminus, the 215-residue chain is Eukaryotic translation initiation factor 4E-1 (215 aa).

The disordered stretch occupies residues 1-32 (MAEDTETRPASAGAEEREEGEIADDGDGSSAA). The segment covering 16 to 27 (EREEGEIADDGD) has biased composition (acidic residues). EIF4G-binding stretches follow at residues 40 to 43 (HPLE) and 50 to 86 (FDNPQGKSRQVAWGSTIHPIHTFSTVEDFWGLYNNIH). Residues 58–63 (RQVAWG), Lys90, and 108–109 (WE) contribute to the mRNA site. Residues Cys113 and Cys151 are joined by a disulfide bond. The segment at 134 to 143 (HTLLAMIGEQ) is EIF4G-binding. Residues 158-163 (RQKQER) and 203-207 (KRSDK) contribute to the mRNA site.

Belongs to the eukaryotic initiation factor 4E family. In terms of assembly, EIF4F is a multi-subunit complex, the composition of which varies with external and internal environmental conditions. It is composed of at least EIF4A, EIF4E and EIF4G. EIF4E is also known to interact with other partners. In higher plants two isoforms of EIF4F have been identified, named isoform EIF4F and isoform EIF(iso)4F. Isoform EIF4F has subunits p220 and p26, whereas isoform EIF(iso)4F has subunits p82 and p28. According to the redox status, the Cys-113-Cys-151 disulfide bridge may have a role in regulating protein function by affecting its ability to bind capped mRNA.

The protein localises to the nucleus. It is found in the cytoplasm. Its function is as follows. Component of the protein complex eIF4F, which is involved in the recognition of the mRNA cap, ATP-dependent unwinding of 5'-terminal secondary structure and recruitment of mRNA to the ribosome. Recognizes and binds the 7-methylguanosine-containing mRNA cap during an early step in the initiation of protein synthesis and facilitates ribosome binding by inducing the unwinding of the mRNAs secondary structures. This is Eukaryotic translation initiation factor 4E-1 from Triticum aestivum (Wheat).